The following is a 1242-amino-acid chain: ATP-dependent RNA helicase DHX8 (1242 aa).

2 disordered regions span residues 75–283 and 354–449; these read RPSR…DDPE and SMKE…GLLP. Composition is skewed to basic and acidic residues over residues 87–97, 113–141, and 180–196; these read TVGDKKEDKKS, YSKK…KTDM, and RDRD…DRHS. Basic residues-rich tracts occupy residues 197–222 and 232–252; these read DRRR…RRSR and DRRH…RSRS. A compositionally biased stretch (basic and acidic residues) spans 253 to 269; the sequence is RSTERRDRRDRSRDCSE. The region spanning 285 to 356 is the S1 motif domain; that stretch reads GKIYSGKIAN…TGQKVSLSMK (72 aa). Residues 388 to 399 are compositionally biased toward polar residues; sequence FSSSTSMLNLQG. Positions 439-449 are enriched in acidic residues; it reads PDFDEETGLLP. Residues 596–759 enclose the Helicase ATP-binding domain; that stretch reads IKAVTDNQIL…FFKAPIFTIP (164 aa). Position 609-616 (609-616) interacts with ATP; that stretch reads GETGSGKT. The DEAH box motif lies at 706–709; that stretch reads DEAH. The Helicase C-terminal domain maps to 777-957; sequence YLDASLITVM…TTVLQLKTMG (181 aa).

Belongs to the DEAD box helicase family. DEAH subfamily. DDX8/PRP22 sub-subfamily. Identified in the spliceosome C complex.

It is found in the nucleus. It catalyses the reaction ATP + H2O = ADP + phosphate + H(+). Functionally, involved in pre-mRNA splicing as component of the spliceosome. Facilitates nuclear export of spliced mRNA by releasing the RNA from the spliceosome. Before and after egg-chamber formation, required for nurse-cell chromatin dispersal (NCCD) probably by playing a role in spliceosome localization to chromatin/interchromatin spaces. This is ATP-dependent RNA helicase DHX8 from Drosophila melanogaster (Fruit fly).